Reading from the N-terminus, the 275-residue chain is Thioredoxin-like 1-1, chloroplastic (275 aa).

A chloroplast-targeting transit peptide spans 1–72 (MTEVISKTSL…GDSQDESFRR (72 aa)). The Thioredoxin domain occupies 73-206 (SSAITAQTTL…FRDALAKHGP (134 aa)). Active-site nucleophile residues include C129 and C132. C129 and C132 are joined by a disulfide. The interval 238 to 275 (KPVPVEKEAATPDSNPSLPVPLPSMSSNDEKTLVSAGR) is disordered. The span at 249–264 (PDSNPSLPVPLPSMSS) shows a compositional bias: low complexity.

This sequence belongs to the thioredoxin family.

The protein resides in the plastid. It is found in the chloroplast. Thiol-disulfide oxidoreductase that may participate in various redox reactions. Possesses insulin disulfide bonds reducing activity. The polypeptide is Thioredoxin-like 1-1, chloroplastic (Arabidopsis thaliana (Mouse-ear cress)).